The chain runs to 217 residues: Adenylate kinase (217 aa).

Position 10–15 (10–15) interacts with ATP; it reads GAGKGT. The tract at residues 30-59 is NMP; that stretch reads STGDMLRAQIKAGTELGMKAKAIMDAGGLV. Residues T31, R36, 57-59, 85-88, and Q92 each bind AMP; these read GLV and GFPR. The segment at 122–159 is LID; the sequence is GRRVHVASGRTYHVVFNPPKVAGKDDVTGEDLIQRDDD. ATP is bound by residues R123 and 132–133; that span reads TY. The AMP site is built by R156 and R167. Residue G203 coordinates ATP.

It belongs to the adenylate kinase family. In terms of assembly, monomer.

It is found in the cytoplasm. It catalyses the reaction AMP + ATP = 2 ADP. The protein operates within purine metabolism; AMP biosynthesis via salvage pathway; AMP from ADP: step 1/1. Functionally, catalyzes the reversible transfer of the terminal phosphate group between ATP and AMP. Plays an important role in cellular energy homeostasis and in adenine nucleotide metabolism. The sequence is that of Adenylate kinase from Thiobacillus denitrificans (strain ATCC 25259 / T1).